The chain runs to 541 residues: Protein wntless homolog B (541 aa).

At 1–15 (MAGAIIENMSTKKLC) the chain is on the cytoplasmic side. Residues 16 to 36 (MVGVALLLLQVLAFLVGGLIA) traverse the membrane as a helical segment. At 37–232 (PKPTTYVNPV…SIFQNGGFTM (196 aa)) the chain is on the lumenal side. Residues 233-253 (VWFAMKTFLTPCIIIIMIWYW) form a helical membrane-spanning segment. Residues 254 to 268 (RRITMMTRSPVLLEK) lie on the Cytoplasmic side of the membrane. A helical transmembrane segment spans residues 269–289 (VIFALGISMTFINIPVEWFSI). Topologically, residues 290–303 (GYDWTWMLLFGDIR) are lumenal. Residues 304-324 (QGIFYAMLLSFWIIFCGEHMM) form a helical membrane-spanning segment. Residues 325-331 (DQAERNR) lie on the Cytoplasmic side of the membrane. The helical transmembrane segment at 332–352 (ISIYWKQVGPIAFGSCCLFIF) threads the bilayer. The Lumenal segment spans residues 353–379 (DMCERGVQLKNPFYSIWTTDVGAEIAM). Residues 380–400 (AFIIVAGICACLYFLFLCFMV) form a helical membrane-spanning segment. Residues 401–431 (YQVFRNISGKRSNLPAMSKARRLHYEGLIFR) lie on the Cytoplasmic side of the membrane. The helical transmembrane segment at 432–452 (FKFLMIITLACAALTVVFFIT) threads the bilayer. Residues 453–471 (TQITEGNWKLGDLSIELNS) are Lumenal-facing. The helical transmembrane segment at 472–492 (AFFTGIYGMWNLYVFALMFLY) threads the bilayer. At 493–541 (APSHKHYGDGQSNDGAGMSSGEELQLTTTITHIDGPTELYRLAGKEAQE) the chain is on the cytoplasmic side.

The protein belongs to the wntless family. As to expression, enriched in the animal hemisphere of the early cleavage embryo, where expression persists until the late gastrula stage. At the neurula stage, strongly expressed at the border of the neural plate and dorsal midline. After the neurula stage, expressed in various organs, including the eye, liver, heart, pronephros, otic vesicle, and dorsal neural tube. Expression in the developing eye is dynamic; expressed in the eye field from stages 23 to 27, and from stage 30 expression is confined to distinct regions including the central part and border of the eye.

Its subcellular location is the golgi apparatus membrane. The protein resides in the cytoplasmic vesicle membrane. Its function is as follows. Required for a subset of Wnt-dependent developmental processes, in particular, eye and pronephros development. Regulates the secretion of wnt4, which is required for eye development. The chain is Protein wntless homolog B (wls-b) from Xenopus laevis (African clawed frog).